A 128-amino-acid chain; its full sequence is Small ribosomal subunit protein eS8 (128 aa).

The interval 1–31 (MAWYQGNDLRKPTGGKKTRHRKKRKHELGRP) is disordered. Over residues 13 to 27 (TGGKKTRHRKKRKHE) the composition is skewed to basic residues.

This sequence belongs to the eukaryotic ribosomal protein eS8 family. As to quaternary structure, part of the 30S ribosomal subunit.

The protein is Small ribosomal subunit protein eS8 of Staphylothermus marinus (strain ATCC 43588 / DSM 3639 / JCM 9404 / F1).